Consider the following 154-residue polypeptide: Ubiquitin-like protein 4A-A (154 aa).

Residues 1–76 enclose the Ubiquitin-like domain; it reads MILTVKPLQG…LNLVVRPAGE (76 aa).

As to quaternary structure, component of the BAT3 complex.

It localises to the cytoplasm. It is found in the cytosol. Functionally, component of the BAT3 complex, a multiprotein complex involved in the post-translational delivery of tail-anchored (TA) membrane proteins to the endoplasmic reticulum membrane. TA membrane proteins, also named type II transmembrane proteins, contain a single C-terminal transmembrane region. The protein is Ubiquitin-like protein 4A-A (ubl4aa) of Oncorhynchus mykiss (Rainbow trout).